We begin with the raw amino-acid sequence, 573 residues long: Urease subunit alpha 2 (573 aa).

A Urease domain is found at 135 to 573 (GGMDTHVHYI…ISLNQLYFFS (439 aa)). Ni(2+) contacts are provided by His140, His142, and Lys223. An N6-carboxylysine modification is found at Lys223. His225 is a substrate binding site. Residues His252 and His278 each coordinate Ni(2+). His326 acts as the Proton donor in catalysis. Residue Asp366 participates in Ni(2+) binding.

It belongs to the metallo-dependent hydrolases superfamily. Urease alpha subunit family. In terms of assembly, heterotrimer of UreA (gamma), UreB (beta) and UreC (alpha) subunits. Three heterotrimers associate to form the active enzyme. Ni cation serves as cofactor. Post-translationally, carboxylation allows a single lysine to coordinate two nickel ions.

The protein localises to the cytoplasm. The catalysed reaction is urea + 2 H2O + H(+) = hydrogencarbonate + 2 NH4(+). It functions in the pathway nitrogen metabolism; urea degradation; CO(2) and NH(3) from urea (urease route): step 1/1. Its function is as follows. Disrupting the ure2 operon has no effect on urease activity, or pathogen survival in BALB/c mice when inoculated by gavage, but confers slightly enhanced resistance to low pH killing in vitro. The polypeptide is Urease subunit alpha 2 (Brucella suis biovar 1 (strain 1330)).